We begin with the raw amino-acid sequence, 673 residues long: DNA ligase (673 aa).

Residues 36 to 40 (DSEYD), 85 to 86 (SL), and E118 each bind NAD(+). K120 (N6-AMP-lysine intermediate) is an active-site residue. NAD(+) contacts are provided by R141, E178, K295, and K319. Residues C413, C416, C431, and C437 each coordinate Zn(2+). Positions 596 to 673 (VRDNPLKGKT…SENEFLALLA (78 aa)) constitute a BRCT domain.

This sequence belongs to the NAD-dependent DNA ligase family. LigA subfamily. The cofactor is Mg(2+). Mn(2+) is required as a cofactor.

The catalysed reaction is NAD(+) + (deoxyribonucleotide)n-3'-hydroxyl + 5'-phospho-(deoxyribonucleotide)m = (deoxyribonucleotide)n+m + AMP + beta-nicotinamide D-nucleotide.. Functionally, DNA ligase that catalyzes the formation of phosphodiester linkages between 5'-phosphoryl and 3'-hydroxyl groups in double-stranded DNA using NAD as a coenzyme and as the energy source for the reaction. It is essential for DNA replication and repair of damaged DNA. This is DNA ligase from Histophilus somni (strain 129Pt) (Haemophilus somnus).